The primary structure comprises 225 residues: Uridine kinase (225 aa).

12–19 (GGTGAGKT) is an ATP binding site.

It belongs to the uridine kinase family.

The protein localises to the cytoplasm. It catalyses the reaction uridine + ATP = UMP + ADP + H(+). It carries out the reaction cytidine + ATP = CMP + ADP + H(+). It participates in pyrimidine metabolism; CTP biosynthesis via salvage pathway; CTP from cytidine: step 1/3. The protein operates within pyrimidine metabolism; UMP biosynthesis via salvage pathway; UMP from uridine: step 1/1. The sequence is that of Uridine kinase from Halobacterium salinarum (strain ATCC 700922 / JCM 11081 / NRC-1) (Halobacterium halobium).